The sequence spans 279 residues: S-formylglutathione hydrolase (279 aa).

Catalysis depends on charge relay system residues Ser150, Asp226, and His258.

The protein belongs to the esterase D family.

It carries out the reaction S-formylglutathione + H2O = formate + glutathione + H(+). Its function is as follows. Serine hydrolase involved in the detoxification of formaldehyde. Hydrolyzes S-formylglutathione to glutathione and formate. In Paracoccus denitrificans (strain Pd 1222), this protein is S-formylglutathione hydrolase (fghA).